Here is a 469-residue protein sequence, read N- to C-terminus: Probable monogalactosyldiacylglycerol synthase 2, chloroplastic (469 aa).

The N-terminal 42 residues, 1 to 42 (MVISVATPRRSIRDAVLGGVLGAGGRQLYQPLRCAFYDGAAG), are a transit peptide targeting the chloroplast.

The protein belongs to the glycosyltransferase 28 family.

The protein resides in the plastid. It localises to the chloroplast membrane. The enzyme catalyses a 1,2-diacyl-sn-glycerol + UDP-alpha-D-galactose = a 1,2-diacyl-3-O-(beta-D-galactosyl)-sn-glycerol + UDP + H(+). Its function is as follows. Involved in the synthesis of the major structural component of photosynthetic membranes. The polypeptide is Probable monogalactosyldiacylglycerol synthase 2, chloroplastic (MGD2) (Oryza sativa subsp. indica (Rice)).